A 152-amino-acid chain; its full sequence is Deoxyuridine 5'-triphosphate nucleotidohydrolase (152 aa).

Residues 71-73 (RSG), Asn-84, 88-90 (LVD), and Met-98 each bind substrate.

The protein belongs to the dUTPase family. Mg(2+) is required as a cofactor.

The catalysed reaction is dUTP + H2O = dUMP + diphosphate + H(+). Its pathway is pyrimidine metabolism; dUMP biosynthesis; dUMP from dCTP (dUTP route): step 2/2. Functionally, this enzyme is involved in nucleotide metabolism: it produces dUMP, the immediate precursor of thymidine nucleotides and it decreases the intracellular concentration of dUTP so that uracil cannot be incorporated into DNA. In Shewanella oneidensis (strain ATCC 700550 / JCM 31522 / CIP 106686 / LMG 19005 / NCIMB 14063 / MR-1), this protein is Deoxyuridine 5'-triphosphate nucleotidohydrolase.